The following is a 243-amino-acid chain: Protein YagJ (243 aa).

This chain is Protein YagJ (yagJ), found in Escherichia coli (strain K12).